A 328-amino-acid polypeptide reads, in one-letter code: Porphobilinogen deaminase (328 aa).

Position 245 is an S-(dipyrrolylmethanemethyl)cysteine (Cys-245).

It belongs to the HMBS family. Monomer. Requires dipyrromethane as cofactor.

It carries out the reaction 4 porphobilinogen + H2O = hydroxymethylbilane + 4 NH4(+). The protein operates within porphyrin-containing compound metabolism; protoporphyrin-IX biosynthesis; coproporphyrinogen-III from 5-aminolevulinate: step 2/4. Its pathway is porphyrin-containing compound metabolism; chlorophyll biosynthesis. Its function is as follows. Tetrapolymerization of the monopyrrole PBG into the hydroxymethylbilane pre-uroporphyrinogen in several discrete steps. This is Porphobilinogen deaminase from Gloeobacter violaceus (strain ATCC 29082 / PCC 7421).